Consider the following 437-residue polypeptide: Eukaryotic peptide chain release factor subunit 1 (437 aa).

Residues 61 to 64 (NIKS) carry the NIKS motif; plays an important role in translational termination motif.

This sequence belongs to the eukaryotic release factor 1 family. In terms of assembly, component of the eRF1-eRF3-GTP ternary complex, composed of ETF1/ERF1 and eRF3 (GSPT1/ERF3A or GSPT2/ERF3B) and GTP.

The protein localises to the cytoplasm. Component of the eRF1-eRF3-GTP ternary complex, a ternary complex that mediates translation termination in response to the termination codons. The eRF1-eRF3-GTP complex binds to a stop codon in the ribosomal A-site. ETF1/ERF1 is responsible for stop codon recognition and inducing hydrolysis of peptidyl-tRNA. Following GTP hydrolysis, eRF3 (GSPT1/ERF3A or GSPT2/ERF3B) dissociates, permitting ETF1/eRF1 to accommodate fully in the A-site, followed by hydrolysis of peptidyl-tRNA. This Xenopus laevis (African clawed frog) protein is Eukaryotic peptide chain release factor subunit 1 (etf1).